The following is a 298-amino-acid chain: UTP--glucose-1-phosphate uridylyltransferase (298 aa).

The protein belongs to the UDPGP type 2 family.

The enzyme catalyses alpha-D-glucose 1-phosphate + UTP + H(+) = UDP-alpha-D-glucose + diphosphate. It participates in carbohydrate metabolism; nucleotide-sugar metabolism. Its pathway is capsule biogenesis; capsule polysaccharide biosynthesis. The polypeptide is UTP--glucose-1-phosphate uridylyltransferase (galF) (Klebsiella pneumoniae).